Reading from the N-terminus, the 589-residue chain is Aspartate--tRNA(Asp/Asn) ligase (589 aa).

Glu-170 contacts L-aspartate. The segment at 194–197 (QLFK) is aspartate. L-aspartate is bound at residue Arg-216. ATP is bound by residues 216 to 218 (RDE) and Gln-225. His-448 is a binding site for L-aspartate. Glu-482 is an ATP binding site. Arg-489 provides a ligand contact to L-aspartate. Residue 534–537 (GWDR) coordinates ATP. The tract at residues 563-589 (PLTDAPASITAQQRKESGIDTKPKEVE) is disordered. The segment covering 575 to 589 (QRKESGIDTKPKEVE) has biased composition (basic and acidic residues).

It belongs to the class-II aminoacyl-tRNA synthetase family. Type 1 subfamily. As to quaternary structure, homodimer.

The protein localises to the cytoplasm. The enzyme catalyses tRNA(Asx) + L-aspartate + ATP = L-aspartyl-tRNA(Asx) + AMP + diphosphate. Functionally, aspartyl-tRNA synthetase with relaxed tRNA specificity since it is able to aspartylate not only its cognate tRNA(Asp) but also tRNA(Asn). Reaction proceeds in two steps: L-aspartate is first activated by ATP to form Asp-AMP and then transferred to the acceptor end of tRNA(Asp/Asn). This is Aspartate--tRNA(Asp/Asn) ligase from Mycobacterium leprae (strain Br4923).